We begin with the raw amino-acid sequence, 488 residues long: Sterol 14-demethylase (488 aa).

A helical transmembrane segment spans residues 12–32; the sequence is TGLVIVATLVIAKLIFSFFTS. Heme is bound at residue C433.

Belongs to the cytochrome P450 family. Heme serves as cofactor. As to expression, expressed in leaves, roots, stems, siliques, flowers, flower buds and seedlings.

Its subcellular location is the membrane. It carries out the reaction a 14alpha-methyl steroid + 3 reduced [NADPH--hemoprotein reductase] + 3 O2 = a Delta(14) steroid + formate + 3 oxidized [NADPH--hemoprotein reductase] + 4 H2O + 4 H(+). Its function is as follows. Involved in sterol biosynthesis. Catalyzes the 14-alpha demethylation of obtusifoliol to 4 alpha-methyl-5 alpha-ergosta-8,14,24(28)-trien-3 beta-ol. This is Sterol 14-demethylase (CYP51G1) from Arabidopsis thaliana (Mouse-ear cress).